The sequence spans 565 residues: Putative lipase ATG15 (565 aa).

Topologically, residues 1 to 21 (MISNDYTKFSSKRRSLRYSNR) are cytoplasmic. A helical; Signal-anchor for type II membrane protein transmembrane segment spans residues 22 to 42 (ILLLMGTILLIVVYFYSDILV). The Lumenal segment spans residues 43–565 (DKSIIMFRNE…EYTTFTKRLI (523 aa)). Residue N217 is glycosylated (N-linked (GlcNAc...) asparagine). S347 functions as the Charge relay system in the catalytic mechanism. The disordered stretch occupies residues 488-538 (KKPKKQTTSSSSEKVDTSTTKSIDRTTITTRTNEKKWHPNPKDPSTTTTDD). Over residues 493–518 (QTTSSSSEKVDTSTTKSIDRTTITTR) the composition is skewed to low complexity. The span at 519 to 528 (TNEKKWHPNP) shows a compositional bias: basic and acidic residues.

The protein belongs to the AB hydrolase superfamily. Lipase family. In terms of assembly, binds to both phosphatidylinositol (PI) and phosphatidylinositol 3,5-bisphosphate (PIP2).

The protein resides in the endosome. Its subcellular location is the multivesicular body membrane. It is found in the prevacuolar compartment membrane. The catalysed reaction is a triacylglycerol + H2O = a diacylglycerol + a fatty acid + H(+). Lipase which is essential for lysis of subvacuolar cytoplasm to vacuole targeted bodies and intravacuolar autophagic bodies. Involved in the lysis of intravacuolar multivesicular body (MVB) vesicles. The intravacuolar membrane disintegration by ATG15 is critical to life span extension. This is Putative lipase ATG15 (ATG15) from Vanderwaltozyma polyspora (strain ATCC 22028 / DSM 70294 / BCRC 21397 / CBS 2163 / NBRC 10782 / NRRL Y-8283 / UCD 57-17) (Kluyveromyces polysporus).